The primary structure comprises 185 residues: Ribosome-recycling factor (185 aa).

It belongs to the RRF family.

The protein resides in the cytoplasm. Responsible for the release of ribosomes from messenger RNA at the termination of protein biosynthesis. May increase the efficiency of translation by recycling ribosomes from one round of translation to another. The polypeptide is Ribosome-recycling factor (Pseudomonas putida (strain W619)).